Reading from the N-terminus, the 545-residue chain is Chaperonin GroEL 1 (545 aa).

Residues Thr29–Pro32, Asp86–Thr90, Gly413, Asp479–Ala481, and Asp495 each bind ATP. The disordered stretch occupies residues Pro525–Tyr545. Residues Ser535–Tyr545 are compositionally biased toward gly residues.

The protein belongs to the chaperonin (HSP60) family. Forms a cylinder of 14 subunits composed of two heptameric rings stacked back-to-back. Interacts with the co-chaperonin GroES.

The protein localises to the cytoplasm. It catalyses the reaction ATP + H2O + a folded polypeptide = ADP + phosphate + an unfolded polypeptide.. Functionally, together with its co-chaperonin GroES, plays an essential role in assisting protein folding. The GroEL-GroES system forms a nano-cage that allows encapsulation of the non-native substrate proteins and provides a physical environment optimized to promote and accelerate protein folding. The protein is Chaperonin GroEL 1 of Thermosynechococcus vestitus (strain NIES-2133 / IAM M-273 / BP-1).